The primary structure comprises 32 residues: Seminal plasma protein PDC-109 (32 aa).

Residues 1–32 (DQDEGVSTEPTQVGPAELHNDETCVGPLVYRN) form a disordered region. O-linked (GalNAc...) threonine glycosylation occurs at T11. A Fibronectin type-II domain is found at 19-32 (HNDETCVGPLVYRN).

This sequence belongs to the seminal plasma protein family. In terms of assembly, homodimer.

It localises to the secreted. Its function is as follows. Could enhance the fertilizing capacity of bull spermatozoa upon interaction with heparin-like glycosaminoglycans present in the female genital tract. Exhibits both simulatory and inhibitory actions on the release of pituitary gonadotropins. Binds to heparin and gelatin. The protein is Seminal plasma protein PDC-109 of Bos indicus (Zebu).